The chain runs to 326 residues: Putative replication protein B (326 aa).

It belongs to the ParB family.

The sequence is that of Putative replication protein B from Sinorhizobium fredii (strain NBRC 101917 / NGR234).